A 360-amino-acid polypeptide reads, in one-letter code: Peptide chain release factor 1 (360 aa).

Glutamine 237 bears the N5-methylglutamine mark.

This sequence belongs to the prokaryotic/mitochondrial release factor family. Post-translationally, methylated by PrmC. Methylation increases the termination efficiency of RF1.

It localises to the cytoplasm. Its function is as follows. Peptide chain release factor 1 directs the termination of translation in response to the peptide chain termination codons UAG and UAA. This chain is Peptide chain release factor 1, found in Pseudomonas savastanoi pv. phaseolicola (strain 1448A / Race 6) (Pseudomonas syringae pv. phaseolicola (strain 1448A / Race 6)).